Here is a 52-residue protein sequence, read N- to C-terminus: Protein RepA (52 aa).

A DNA-binding region (H-T-H motif) is located at residues 20–40 (KLEELAQKYGMTKSGLVNFLV).

It belongs to the transcriptional regulatory CopG/NikR family. As to quaternary structure, homodimer.

In terms of biological role, regulates the plasmid copy number. RepA binds to the repAB promoter thus controlling the synthesis of the plasmid replication initiator protein RepB. The protein is Protein RepA (repA) of Lactiplantibacillus plantarum (Lactobacillus plantarum).